Consider the following 380-residue polypeptide: Palmitoyltransferase ZDHHC20 (380 aa).

Residues Met-1–Val-14 lie on the Cytoplasmic side of the membrane. A helical membrane pass occupies residues Gly-15–Val-35. Topologically, residues Glu-36–Val-53 are lumenal. The chain crosses the membrane as a helical span at residues Tyr-54–Phe-74. At Thr-75–Lys-169 the chain is on the cytoplasmic side. Residues Arg-126–Leu-176 enclose the DHHC domain. Zn(2+)-binding residues include Cys-128 and Cys-131. Substrate-binding positions include Lys-135 and His-140–Ser-143. Positions 141, 142, 145, 148, and 155 each coordinate Zn(2+). The S-palmitoyl cysteine intermediate role is filled by Cys-156. Position 162 (Cys-162) interacts with Zn(2+). Residues Phe-170–Leu-190 form a helical membrane-spanning segment. The Lumenal portion of the chain corresponds to Glu-191–Lys-222. The chain crosses the membrane as a helical span at residues Phe-223–His-246. Residues Cys-247–Asn-380 are Cytoplasmic-facing. A phosphoserine mark is found at Ser-320, Ser-345, and Ser-354.

It belongs to the DHHC palmitoyltransferase family. Post-translationally, autopalmitoylated (in vitro). In terms of tissue distribution, highest levels in lung.

It localises to the golgi apparatus membrane. Its subcellular location is the cell membrane. The protein localises to the cytoplasm. The protein resides in the perinuclear region. It is found in the endoplasmic reticulum membrane. It localises to the endoplasmic reticulum-Golgi intermediate compartment membrane. It catalyses the reaction L-cysteinyl-[protein] + hexadecanoyl-CoA = S-hexadecanoyl-L-cysteinyl-[protein] + CoA. The catalysed reaction is L-cysteinyl-[protein] + tetradecanoyl-CoA = S-tetradecanoyl-L-cysteinyl-[protein] + CoA. The enzyme catalyses L-cysteinyl-[protein] + octadecanoyl-CoA = S-octadecanoyl-L-cysteinyl-[protein] + CoA. In terms of biological role, palmitoyltransferase that could catalyze the addition of palmitate onto various protein substrates. Catalyzes palmitoylation of Cys residues in the cytoplasmic C-terminus of EGFR, and modulates the duration of EGFR signaling by modulating palmitoylation-dependent EGFR internalization and degradation. Has a preference for acyl-CoA with C16 fatty acid chains. Can also utilize acyl-CoA with C14 and C18 fatty acid chains. May palmitoylate CALHM1 subunit of gustatory voltage-gated ion channels and modulate channel gating and kinetics. This Mus musculus (Mouse) protein is Palmitoyltransferase ZDHHC20.